Consider the following 185-residue polypeptide: Ribosome-recycling factor (185 aa).

Belongs to the RRF family.

The protein localises to the cytoplasm. Responsible for the release of ribosomes from messenger RNA at the termination of protein biosynthesis. May increase the efficiency of translation by recycling ribosomes from one round of translation to another. The sequence is that of Ribosome-recycling factor from Brevibacillus brevis (strain 47 / JCM 6285 / NBRC 100599).